Here is a 266-residue protein sequence, read N- to C-terminus: Interleukin-33 (266 aa).

Residues 1-67 (MRPRMKYSNS…ETSYFRKEPT (67 aa)) form a homeodomain-like HTH domain region. Residues 1-101 (MRPRMKYSNS…RSLLGSIQAF (101 aa)) constitute a propeptide that is removed on maturation. An interaction with RELA region spans residues 66–108 (PTKRYSLKSGTKHEENFSAYPRDSRKRSLLGSIQAFAASVDTL).

This sequence belongs to the IL-1 family. Highly divergent. In terms of assembly, (Microbial infection) Interacts (in reduced form) with H.polygyrus ARI; the interaction abolishes the interaction with its primary receptor IL1RL1. Forms a 1:1:1 heterotrimeric complex with its primary high-affinity receptor IL1RL1 and the coreceptor IL1RAP. Interacts with cargo receptor TMED10; the interaction mediates the translocation from the cytoplasm into the ERGIC (endoplasmic reticulum-Golgi intermediate compartment) and thereby secretion. In terms of processing, the full-length protein can be released from cells and is able to signal via the IL1RL1/ST2 receptor. However, proteolytic processing by CELA1, CSTG/cathepsin G and ELANE/neutrophil elastase produces C-terminal peptides that are more active than the unprocessed full-length protein. May also be proteolytically processed by calpains. Proteolytic cleavage mediated by apoptotic caspases including CASP3 and CASP7 results in IL33 inactivation. In vitro proteolytic cleavage by CASP1 was reported but could not be confirmed in vivo suggesting that IL33 is probably not a direct substrate for that caspase.

It is found in the nucleus. The protein localises to the chromosome. Its subcellular location is the cytoplasm. It localises to the cytoplasmic vesicle. The protein resides in the secretory vesicle. It is found in the secreted. Functionally, cytokine that binds to and signals through the IL1RL1/ST2 receptor which in turn activates NF-kappa-B and MAPK signaling pathways in target cells. Involved in the maturation of Th2 cells inducing the secretion of T-helper type 2-associated cytokines. Also involved in activation of mast cells, basophils, eosinophils and natural killer cells. Acts as an enhancer of polarization of alternatively activated macrophages. Acts as a chemoattractant for Th2 cells, and may function as an 'alarmin', that amplifies immune responses during tissue injury. Induces rapid UCP2-dependent mitochondrial rewiring that attenuates the generation of reactive oxygen species and preserves the integrity of Krebs cycle required for persistent production of itaconate and subsequent GATA3-dependent differentiation of inflammation-resolving alternatively activated macrophages. In terms of biological role, in quiescent endothelia the uncleaved form is constitutively and abundantly expressed, and acts as a chromatin-associated nuclear factor with transcriptional repressor properties, it may sequester nuclear NF-kappaB/RELA, lowering expression of its targets. This form is rapidely lost upon angiogenic or pro-inflammatory activation. The chain is Interleukin-33 from Mus musculus (Mouse).